A 357-amino-acid polypeptide reads, in one-letter code: Glycerol-3-phosphate dehydrogenase [NAD(P)+] (357 aa).

NADPH contacts are provided by S30, F31, R51, and K124. Residues K124 and G152 each coordinate sn-glycerol 3-phosphate. A156 contributes to the NADPH binding site. Residues K207, D260, S270, R271, and N272 each contribute to the sn-glycerol 3-phosphate site. The active-site Proton acceptor is K207. Position 271 (R271) interacts with NADPH. E297 is a binding site for NADPH.

The protein belongs to the NAD-dependent glycerol-3-phosphate dehydrogenase family.

Its subcellular location is the cytoplasm. The catalysed reaction is sn-glycerol 3-phosphate + NAD(+) = dihydroxyacetone phosphate + NADH + H(+). It catalyses the reaction sn-glycerol 3-phosphate + NADP(+) = dihydroxyacetone phosphate + NADPH + H(+). Its pathway is membrane lipid metabolism; glycerophospholipid metabolism. Catalyzes the reduction of the glycolytic intermediate dihydroxyacetone phosphate (DHAP) to sn-glycerol 3-phosphate (G3P), the key precursor for phospholipid synthesis. This is Glycerol-3-phosphate dehydrogenase [NAD(P)+] from Acinetobacter baumannii (strain SDF).